Consider the following 93-residue polypeptide: DNA-binding protein Fis (93 aa).

Positions 74-93 (QTRAALMMGINRGTLRKKLK) form a DNA-binding region, H-T-H motif.

It belongs to the transcriptional regulatory Fis family. In terms of assembly, homodimer.

Its function is as follows. Activates ribosomal RNA transcription. Plays a direct role in upstream activation of rRNA promoters. The chain is DNA-binding protein Fis from Klebsiella pneumoniae.